The primary structure comprises 78 residues: Acyl carrier protein (78 aa).

Residues 1–75 (MIKEKILSIV…DLISVVKNST (75 aa)) form the Carrier domain. O-(pantetheine 4'-phosphoryl)serine is present on serine 35.

It belongs to the acyl carrier protein (ACP) family. 4'-phosphopantetheine is transferred from CoA to a specific serine of apo-ACP by AcpS. This modification is essential for activity because fatty acids are bound in thioester linkage to the sulfhydryl of the prosthetic group.

Its subcellular location is the cytoplasm. Its pathway is lipid metabolism; fatty acid biosynthesis. In terms of biological role, carrier of the growing fatty acid chain in fatty acid biosynthesis. The polypeptide is Acyl carrier protein (acpP) (Shigella flexneri).